The sequence spans 189 residues: Elongation factor P (189 aa).

Lysine 34 bears the N6-(3,6-diaminohexanoyl)-5-hydroxylysine mark.

Belongs to the elongation factor P family. May be beta-lysylated on the epsilon-amino group of Lys-34 by the combined action of EpmA and EpmB, and then hydroxylated on the C5 position of the same residue by EpmC (if this protein is present). Lysylation is critical for the stimulatory effect of EF-P on peptide-bond formation. The lysylation moiety may extend toward the peptidyltransferase center and stabilize the terminal 3-CCA end of the tRNA. Hydroxylation of the C5 position on Lys-34 may allow additional potential stabilizing hydrogen-bond interactions with the P-tRNA.

It is found in the cytoplasm. Its pathway is protein biosynthesis; polypeptide chain elongation. Its function is as follows. Involved in peptide bond synthesis. Alleviates ribosome stalling that occurs when 3 or more consecutive Pro residues or the sequence PPG is present in a protein, possibly by augmenting the peptidyl transferase activity of the ribosome. Modification of Lys-34 is required for alleviation. This chain is Elongation factor P, found in Francisella tularensis subsp. tularensis (strain FSC 198).